A 931-amino-acid polypeptide reads, in one-letter code: Short transient receptor potential channel 6 (931 aa).

Low complexity predominate over residues 1–23 (MSQSPAFGPRRGSSPRGAAGAAA). Residues 1-26 (MSQSPAFGPRRGSSPRGAAGAAARRN) form a disordered region. Over 1–438 (MSQSPAFGPR…CSKMGKIMRG (438 aa)) the chain is Cytoplasmic. ANK repeat units follow at residues 97 to 126 (IEEERFLDAAEYGNIPVVRKMLEECHSLNV), 132 to 161 (MGQNALQLAVANEHLEITELLLKKENLSRV), 163 to 189 (DALLLAISKGYVRIVEAILSHPAFAEG), and 218 to 247 (HDVTPIILAAHCQEYEIVHTLLRKGARIER). A helical membrane pass occupies residues 439 to 459 (PFMKFVAHAASFTIFLGLLVM). Residues 460 to 487 (NAADRFEGTKLLPNETSTDNAKQLFRMK) lie on the Extracellular side of the membrane. N473 is a glycosylation site (N-linked (GlcNAc...) asparagine). The chain crosses the membrane as a helical span at residues 488–508 (TSCFSWMEMLIISWVIGMIWA). Topologically, residues 509–521 (ECKEIWTQGPKEY) are cytoplasmic. Residues 522-542 (LFELWNMLDFGMLAIFAASFI) traverse the membrane as a helical segment. Topologically, residues 543–592 (ARFMAFWHASKAQSIIDANDTLKDLTKVTLGDNVKYYNLARIKWDPSDPQ) are extracellular. An N-linked (GlcNAc...) asparagine glycan is attached at N561. Residues 593-613 (IISEGLYAIAVVLSFSRIAYI) traverse the membrane as a helical segment. Topologically, residues 614 to 636 (LPANESFGPLQISLGRTVKDIFK) are cytoplasmic. The helical transmembrane segment at 637-657 (FMVIFIMVFVAFMIGMFNLYS) threads the bilayer. The Extracellular portion of the chain corresponds to 658–706 (YYIGAKQNEAFTTVEESFKTLFWAIFGLSEVKSVVINYNHKFIENIGYV). Residues 707–727 (LYGVYNVTMVIVLLNMLIAMI) traverse the membrane as a helical segment. Over 728-931 (NSSFQEIEDD…MEPNQEETNR (204 aa)) the chain is Cytoplasmic. Position 815 is a phosphoserine (S815).

This sequence belongs to the transient receptor (TC 1.A.4) family. STrpC subfamily. TRPC6 sub-subfamily. As to quaternary structure, homodimer; forms channel complex. Interacts with MX1 and RNF24. Phosphorylated by FYN, leading to an increase of TRPC6 channel activity. In terms of tissue distribution, expressed primarily in placenta, lung, spleen, ovary and small intestine. Expressed in podocytes and is a component of the glomerular slit diaphragm.

It localises to the cell membrane. The catalysed reaction is Ca(2+)(in) = Ca(2+)(out). Activated by diacylglycerol (DAG) in a membrane-delimited fashion, independently of protein kinase C. Forms a receptor-activated non-selective calcium permeant cation channel. Probably is operated by a phosphatidylinositol second messenger system activated by receptor tyrosine kinases or G-protein coupled receptors. Activated by diacylglycerol (DAG) in a membrane-delimited fashion, independently of protein kinase C. Seems not to be activated by intracellular calcium store depletion. This chain is Short transient receptor potential channel 6, found in Homo sapiens (Human).